Reading from the N-terminus, the 2067-residue chain is Non-reducing polyketide synthase PKS12 (2067 aa).

Residues 4–241 (FVFGDQSTRF…LPVPIYAPYH (238 aa)) are N-terminal acylcarrier protein transacylase (SAT) domain. Positions 350–373 (NSMGPKASTSHSSAETQTESSSKN) are disordered. The span at 356–373 (ASTSHSSAETQTESSSKN) shows a compositional bias: polar residues. One can recognise a Ketosynthase family 3 (KS3) domain in the interval 373–808 (NSKIAIVAMS…GGNSAVLLQD (436 aa)). Active-site for beta-ketoacyl synthase activity residues include cysteine 545, histidine 680, and histidine 725. A malonyl-CoA:ACP transacylase (MAT) domain region spans residues 912-1199 (FVFSGQGAQY…VVCSTFLKSS (288 aa)). Serine 1001 (for acyl/malonyl transferase activity) is an active-site residue. Residues 1297–1433 (QKILQETSLD…CELRLEHPSQ (137 aa)) form an N-terminal hotdog fold region. The PKS/mFAS DH domain maps to 1297–1606 (QKILQETSLD…FQGLPRRVLN (310 aa)). The active-site Proton acceptor; for dehydratase activity is histidine 1329. Positions 1329 to 1604 (HRVNGVKVCT…ITFQGLPRRV (276 aa)) are product template (PT) domain. Residues 1460–1606 (LDSMLATGMV…FQGLPRRVLN (147 aa)) form a C-terminal hotdog fold region. Aspartate 1519 functions as the Proton donor; for dehydratase activity in the catalytic mechanism. Positions 1619-1648 (APMGRRDVPPSRMDVPPVRSGEGPPTSAPT) are disordered. The region spanning 1660 to 1738 (TSMDSRLRPL…SFKLFLGLVD (79 aa)) is the Carrier domain. Serine 1698 is subject to O-(pantetheine 4'-phosphoryl)serine. The disordered stretch occupies residues 1742-1779 (KSSSGSDGSGRSSPAPGIESGATTPPMSEEDQDKIVSS). Positions 1743–1754 (SSSGSDGSGRSS) are enriched in low complexity. A claisen cyclase domain region spans residues 1781-2065 (SLHQFQASST…YVSAFLARAL (285 aa)). Residue serine 1875 is the For Claisen cyclase activity of the active site.

It carries out the reaction 6 malonyl-CoA + acetyl-CoA + 6 H(+) = naphtopyrone YWA1 + 6 CO2 + 7 CoA + H2O. Its pathway is pigment biosynthesis. Functionally, non-reducing polyketide synthase; part of the gene cluster that mediates the biosynthesis of aurofusarin, a red mycelium pigment which is acting as a mycotoxin. The first step is performed by the polyketide synthase which condenses one acetyl-CoA and 6 malonyl-CoA units to form the first intermediate, the cyclic heptaketide and yellow pigment YWA1. The C2 hydroxyl group in the pyrone ring of YWA1 is probably formed during ring closure by an aldol-type cyclization reaction. The dehydratase aurZ then acts as the first tailoring enzyme in the aurofusarin biosynthetic pathway by converting YWA1 to nor-rubrofusarin. Nor-rubrofusarin is then methylated to rubrofusarin by the O-methyltransferase aurJ. Rubrofusarin is then transported across the plasma membrane by the rubrofusarin-specific pump aurT for further enzymatic processing by the extracellular complex composed of GIP1, aurF, aurO and aurS to yield aurofusarin. This Gibberella zeae (strain ATCC MYA-4620 / CBS 123657 / FGSC 9075 / NRRL 31084 / PH-1) (Wheat head blight fungus) protein is Non-reducing polyketide synthase PKS12.